A 419-amino-acid polypeptide reads, in one-letter code: Aminoacyltransferase FemB (419 aa).

It belongs to the FemABX family. In terms of assembly, homodimer. Interacts with FemA.

It is found in the cytoplasm. The catalysed reaction is MurNAc-L-Ala-D-isoglutaminyl-L-Lys-(N(6)-tri-Gly)-D-Ala-D-Ala-diphospho-di-trans,octa-cis-undecaprenyl-GlcNAc + 2 glycyl-tRNA(Gly) = MurNAc-L-Ala-D-isoglutaminyl-L-Lys-(N(6)-penta-Gly)-D-Ala-D-Ala-diphospho-di-trans,octa-cis-undecaprenyl-GlcNAc + 2 tRNA(Gly) + 2 H(+). Its function is as follows. Catalyzes the formation of the pentaglycine interpeptide bridge, which is characteristic of the S.aureus peptidoglycan. Adds glycines 4 and 5 of the pentaglycine bridge, using glycyl-tRNA(Gly) as donor. In Staphylococcus aureus (strain bovine RF122 / ET3-1), this protein is Aminoacyltransferase FemB (femB).